A 308-amino-acid chain; its full sequence is Transaldolase (308 aa).

Lys-125 serves as the catalytic Schiff-base intermediate with substrate.

Belongs to the transaldolase family. Type 1 subfamily. In terms of assembly, homodimer.

It localises to the cytoplasm. The catalysed reaction is D-sedoheptulose 7-phosphate + D-glyceraldehyde 3-phosphate = D-erythrose 4-phosphate + beta-D-fructose 6-phosphate. Its pathway is carbohydrate degradation; pentose phosphate pathway; D-glyceraldehyde 3-phosphate and beta-D-fructose 6-phosphate from D-ribose 5-phosphate and D-xylulose 5-phosphate (non-oxidative stage): step 2/3. Functionally, transaldolase is important for the balance of metabolites in the pentose-phosphate pathway. This Stutzerimonas stutzeri (strain A1501) (Pseudomonas stutzeri) protein is Transaldolase.